A 69-amino-acid chain; its full sequence is uncharacterized protein (69 aa).

Residues 1-15 (MLLYIVIIVACIISK) are Cytoplasmic-facing. Residues 16–36 (LVPNEYWAIHLFFIIMIFMVY) traverse the membrane as a helical segment. Residues 37 to 69 (MYEKLDIHQKYQFWNYTMSGLSGHNVQVICKCY) are Extracellular-facing. Asn51 carries N-linked (GlcNAc...) asparagine; by host glycosylation.

It belongs to the asfivirus X69R family.

Its subcellular location is the host membrane. This is an uncharacterized protein from Ornithodoros (relapsing fever ticks).